Consider the following 698-residue polypeptide: uncharacterized protein (698 aa).

An N-terminal signal peptide occupies residues Met-1–Ala-17. The N-palmitoyl cysteine moiety is linked to residue Cys-18. The S-diacylglycerol cysteine moiety is linked to residue Cys-18.

It to E.coli YmcA.

The protein resides in the cell membrane. This is an uncharacterized protein from Escherichia coli (strain K12).